A 349-amino-acid chain; its full sequence is Flap endonuclease 1 (349 aa).

The N-domain stretch occupies residues M1–K98. Positions 27, 80, 152, 154, 173, 175, and 236 each coordinate Mg(2+). The tract at residues E116–G258 is I-domain. The tract at residues R341–F349 is interaction with PCNA.

The protein belongs to the XPG/RAD2 endonuclease family. FEN1 subfamily. As to quaternary structure, interacts with PCNA via subunit PCNA1. Requires Mg(2+) as cofactor.

Its activity is regulated as follows. Heterotrimeric PCNA stimulates the nuclease activity without altering cleavage specificity. In terms of biological role, structure-specific nuclease with 5'-flap endonuclease and 5'-3' exonuclease activities involved in DNA replication and repair. During DNA replication, cleaves the 5'-overhanging flap structure that is generated by displacement synthesis when DNA polymerase encounters the 5'-end of a downstream Okazaki fragment. Binds the unpaired 3'-DNA end and kinks the DNA to facilitate 5' cleavage specificity. Cleaves one nucleotide into the double-stranded DNA from the junction in flap DNA, leaving a nick for ligation. Also involved in the base excision repair (BER) pathway. Acts as a genome stabilization factor that prevents flaps from equilibrating into structures that lead to duplications and deletions. Also possesses 5'-3' exonuclease activity on nicked or gapped double-stranded DNA. DNA polymerase I, DNA ligase and the flap endonuclease may be constitutively associated with the PCNA heterotrimer forming a scanning complex able to couple DNA synthesis and Okazaki fragment maturation. This chain is Flap endonuclease 1, found in Saccharolobus solfataricus (strain ATCC 35092 / DSM 1617 / JCM 11322 / P2) (Sulfolobus solfataricus).